We begin with the raw amino-acid sequence, 107 residues long: Protein HitA (107 aa).

Residues 5–107 (IFCKIAAKEI…LHIHIMGTPV (103 aa)) form the HIT domain. Positions 97-101 (HLHIH) match the Histidine triad motif motif.

The sequence is that of Protein HitA (hitA) from Neisseria gonorrhoeae.